The sequence spans 411 residues: Mitogen-activated protein kinase 8 (411 aa).

The region spanning 26 to 321 (YQNLKPIGSG…VDEALQHPYI (296 aa)) is the Protein kinase domain. ATP is bound by residues 32-40 (IGSGAQGIV) and K55. An S-nitrosocysteine; in inhibited form modification is found at C116. Residue D151 is the Proton acceptor of the active site. Position 183 is a phosphothreonine; by MAP2K7 (T183). A TXY motif is present at residues 183–185 (TPY). Y185 carries the phosphotyrosine; by MAP2K4 modification. The interval 368–411 (KNGVIRGQPSPLGAAVINGSQHPVSSPSVNDMSSMSTDPTLASD) is disordered. S377 is subject to Phosphoserine. Low complexity predominate over residues 390-403 (PVSSPSVNDMSSMS).

This sequence belongs to the protein kinase superfamily. CMGC Ser/Thr protein kinase family. MAP kinase subfamily. Forms a complex with MAPK8IP1 and ARHGEF28. Found in a complex with SH3RF1, RAC1, MAP3K11/MLK3, MAP2K7/MKK7 and MAPK8IP1/JIP1. Found in a complex with SH3RF1, RAC2, MAP3K7/TAK1, MAP2K7/MKK7, MAPK8IP1/JIP1 and MAPK9/JNK2. Binds to at least four scaffolding proteins, MAPK8IP1/JIP-1, MAPK8IP2/JIP-2, MAPK8IP3/JIP-3/JSAP1 and SPAG9/MAPK8IP4/JIP-4. These proteins also bind other components of the JNK signaling pathway. Interacts with TP53, WWOX. Interacts with JAMP. Interacts with NFATC4. Interacts (phosphorylated form) with NFE2; the interaction phosphorylates NFE2 in undifferentiated cells. Interacts with MECOM; regulates JNK signaling. Interacts with PIN1; this interaction mediates MAPK8 conformational changes leading to the binding of MAPK8 to its substrates. Interacts with HSF1 (via D domain and preferentially with hyperphosphorylated form); this interaction occurs under both normal growth conditions and immediately upon heat shock. Interacts with STMN2, STMN3 and STMN4. Interacts with GRIPAP1. Interacts with POU5F1; phosphorylates POU5F1 at 'Ser-347'. Interacts with HSF4. Mg(2+) is required as a cofactor. Dually phosphorylated on Thr-183 and Tyr-185 by MAP2K7 and MAP2K4, which activates the enzyme. Phosphorylated by TAOK2. Phosphorylated form is more concentrated at synapses than none-phosphorylated. Post-translationally, nitrosylated upon IFN-gamma-induced endogenous NO production, which inhibits the enzyme. May be phosphorylated at Thr-183 and Tyr-185 by MAP3K1/MEKK1.

It is found in the cytoplasm. The protein resides in the nucleus. It localises to the synapse. The catalysed reaction is L-seryl-[protein] + ATP = O-phospho-L-seryl-[protein] + ADP + H(+). It catalyses the reaction L-threonyl-[protein] + ATP = O-phospho-L-threonyl-[protein] + ADP + H(+). Its activity is regulated as follows. Activated by threonine and tyrosine phosphorylation by either of two dual specificity kinases, MAP2K4 and MAP2K7. MAP2K4 shows a strong preference for Tyr-185 while MAP2K7 phosphorylates Tyr-183 preferentially. Inhibited by dual specificity phosphatases, such as DUSP1. Inhibited by SERPINB3. Inhibited by IFN-gamma-induced S-nitrosylation. Serine/threonine-protein kinase involved in various processes such as cell proliferation, differentiation, migration, transformation and programmed cell death. Extracellular stimuli such as pro-inflammatory cytokines or physical stress stimulate the stress-activated protein kinase/c-Jun N-terminal kinase (SAP/JNK) signaling pathway. In this cascade, two dual specificity kinases MAP2K4/MKK4 and MAP2K7/MKK7 phosphorylate and activate MAPK8/JNK1. In turn, MAPK8/JNK1 phosphorylates a number of transcription factors, primarily components of AP-1 such as JUN, JDP2 and ATF2 and thus regulates AP-1 transcriptional activity. Phosphorylates the replication licensing factor CDT1, inhibiting the interaction between CDT1 and the histone H4 acetylase HBO1 to replication origins. Loss of this interaction abrogates the acetylation required for replication initiation. Promotes stressed cell apoptosis by phosphorylating key regulatory factors including p53/TP53 and Yes-associates protein YAP1. In T-cells, MAPK8 and MAPK9 are required for polarized differentiation of T-helper cells into Th1 cells. Contributes to the survival of erythroid cells by phosphorylating the antagonist of cell death BAD upon EPO stimulation. Mediates starvation-induced BCL2 phosphorylation, BCL2 dissociation from BECN1, and thus activation of autophagy. Phosphorylates STMN2 and hence regulates microtubule dynamics, controlling neurite elongation in cortical neurons. In the developing brain, through its cytoplasmic activity on STMN2, negatively regulates the rate of exit from multipolar stage and of radial migration from the ventricular zone. Phosphorylates several other substrates including heat shock factor protein 4 (HSF4), the deacetylase SIRT1, ELK1, or the E3 ligase ITCH. Phosphorylates the CLOCK-BMAL1 heterodimer and plays a role in the regulation of the circadian clock. Phosphorylates the heat shock transcription factor HSF1, suppressing HSF1-induced transcriptional activity. Phosphorylates POU5F1, which results in the inhibition of POU5F1's transcriptional activity and enhances its proteasomal degradation. Phosphorylates JUND and this phosphorylation is inhibited in the presence of MEN1. In neurons, phosphorylates SYT4 which captures neuronal dense core vesicles at synapses. Phosphorylates EIF4ENIF1/4-ET in response to oxidative stress, promoting P-body assembly. Phosphorylates SIRT6 in response to oxidative stress, stimulating its mono-ADP-ribosyltransferase activity. Phosphorylates NLRP3, promoting assembly of the NLRP3 inflammasome. Phosphorylates ALKBH5 in response to reactive oxygen species (ROS), promoting ALKBH5 sumoylation and inactivation. The polypeptide is Mitogen-activated protein kinase 8 (Mapk8) (Rattus norvegicus (Rat)).